We begin with the raw amino-acid sequence, 328 residues long: DNA polymerase IV (328 aa).

The UmuC domain occupies 6–187 (IIHIDMDYFF…LDIGDFPGVG (182 aa)). Residues Asp-10 and Asp-105 each contribute to the Mg(2+) site. Glu-106 is an active-site residue.

It belongs to the DNA polymerase type-Y family. Monomer. Mg(2+) is required as a cofactor.

It localises to the cytoplasm. It carries out the reaction DNA(n) + a 2'-deoxyribonucleoside 5'-triphosphate = DNA(n+1) + diphosphate. Its function is as follows. Poorly processive, error-prone DNA polymerase involved in untargeted mutagenesis. Copies undamaged DNA at stalled replication forks, which arise in vivo from mismatched or misaligned primer ends. These misaligned primers can be extended by PolIV. Exhibits no 3'-5' exonuclease (proofreading) activity. May be involved in translesional synthesis, in conjunction with the beta clamp from PolIII. The sequence is that of DNA polymerase IV from Staphylococcus aureus (strain bovine RF122 / ET3-1).